The sequence spans 1317 residues: uncharacterized protein (1317 aa).

It belongs to the oxoprolinase family.

This is an uncharacterized protein from Schizosaccharomyces pombe (strain 972 / ATCC 24843) (Fission yeast).